The following is a 478-amino-acid chain: Dynein regulatory complex subunit 4 (478 aa).

Residues 1-12 (MAPKRRGKKGKA) are compositionally biased toward basic residues. Residues 1-32 (MAPKRRGKKGKAKGNAVVDGVAPEDMSKEQVE) form a disordered region. The interval 1–114 (MAPKRRGKKG…LLYEHQNNLA (114 aa)) is regulates microtubule-binding. Coiled coils occupy residues 24 to 201 (EDMS…DELD) and 243 to 427 (NNLA…LARV). The segment at 115–258 (EVKTEGTVVM…NSLKEQMEDM (144 aa)) is microtubule-binding. An interaction with SMO region spans residues 357-478 (QQKTGFKNLV…GPAGLVGAPT (122 aa)).

The protein belongs to the DRC4 family. In terms of assembly, component of the nexin-dynein regulatory complex (N-DRC). Interacts with microtubules. Interacts with SMO. Interacts (via coiled-coil domains) with RAB3B (in GTP-bound form). Interacts with DRC1. Interacts with DRC7.

It localises to the cytoplasm. It is found in the cytoskeleton. The protein resides in the cell projection. Its subcellular location is the cilium. The protein localises to the flagellum. It localises to the cilium axoneme. It is found in the cilium basal body. The protein resides in the golgi apparatus. Its subcellular location is the flagellum axoneme. Functionally, component of the nexin-dynein regulatory complex (N-DRC), a key regulator of ciliary/flagellar motility which maintains the alignment and integrity of the distal axoneme and regulates microtubule sliding in motile axonemes. Plays an important role in the assembly of the N-DRC linker. Plays dual roles at both the primary (or non-motile) cilia to regulate hedgehog signaling and in motile cilia to coordinate cilia movement. Required for proper motile cilia functioning. Positively regulates ciliary smoothened (SMO)-dependent Hedgehog (Hh) signaling pathway by facilitating the trafficking of SMO into the cilium and the stimulation of SMO activity in a GRK2-dependent manner. The protein is Dynein regulatory complex subunit 4 (Gas8) of Rattus norvegicus (Rat).